The following is a 382-amino-acid chain: Heme A synthase (382 aa).

Helical transmembrane passes span 25 to 45 (GAVR…VAVG), 112 to 132 (LLGR…WARG), 138 to 158 (LLLG…IGWI), 176 to 196 (LALH…LAAG), 211 to 231 (VVAG…GLVA), 270 to 290 (LALV…VAIA), 303 to 323 (AAAG…GLGI), and 327 to 347 (LLHV…AVLI). Residue His-277 coordinates heme. His-338 provides a ligand contact to heme.

The protein belongs to the COX15/CtaA family. Type 2 subfamily. As to quaternary structure, interacts with CtaB. Heme b is required as a cofactor.

Its subcellular location is the cell membrane. It catalyses the reaction Fe(II)-heme o + 2 A + H2O = Fe(II)-heme a + 2 AH2. It functions in the pathway porphyrin-containing compound metabolism; heme A biosynthesis; heme A from heme O: step 1/1. In terms of biological role, catalyzes the conversion of heme O to heme A by two successive hydroxylations of the methyl group at C8. The first hydroxylation forms heme I, the second hydroxylation results in an unstable dihydroxymethyl group, which spontaneously dehydrates, resulting in the formyl group of heme A. This Methylorubrum extorquens (strain PA1) (Methylobacterium extorquens) protein is Heme A synthase.